Here is a 550-residue protein sequence, read N- to C-terminus: Protein UshA (550 aa).

The N-terminal stretch at 1-25 is a signal peptide; it reads MKFLKRGVALALLAAFALTTQPAQA. 7 residues coordinate Zn(2+): Asp41, His43, Asp84, Asn116, His217, His252, and Gln254. A disulfide bridge links Cys258 with Cys275. Substrate is bound by residues Phe429 and 498–504; that span reads FNATGGD.

This sequence belongs to the 5'-nucleotidase family. As to quaternary structure, monomer. Zn(2+) serves as cofactor.

Its subcellular location is the periplasm. It catalyses the reaction UDP-sugar + H2O = UMP + alpha-D-aldose 1-phosphate.. The enzyme catalyses a ribonucleoside 5'-phosphate + H2O = a ribonucleoside + phosphate. In terms of biological role, degradation of external UDP-glucose to uridine monophosphate and glucose-1-phosphate, which can then be used by the cell. The polypeptide is Protein UshA (ushA) (Salmonella pullorum).